The primary structure comprises 329 residues: Ferredoxin--NADP reductase 2 (329 aa).

FAD is bound by residues Thr18, Glu37, Gln45, Tyr50, Val90, Phe124, Asp285, and Ser326.

Belongs to the ferredoxin--NADP reductase type 2 family. In terms of assembly, homodimer. FAD is required as a cofactor.

The catalysed reaction is 2 reduced [2Fe-2S]-[ferredoxin] + NADP(+) + H(+) = 2 oxidized [2Fe-2S]-[ferredoxin] + NADPH. In Bacillus cytotoxicus (strain DSM 22905 / CIP 110041 / 391-98 / NVH 391-98), this protein is Ferredoxin--NADP reductase 2.